We begin with the raw amino-acid sequence, 302 residues long: MGRKRKGRDISGWLVVDKPAGLTSTAVVNKVRWAFDAKKAGHAGTLDPEATGVLAVALGEATKTVPFITDAMKAYTFTVTLGAATNTDDAEGEVIATSAERPTDDDIKEALLGFIGEIQQVPPKFSAVKIDGQRAYKLARDGEEVELSARPLWVEELVMLDRPDADHVVLEMTCGKGGYVRSIARDLGEKLGCLGHVRELRRIWSGPFDAEDGVTLEQIDALAKSPEIDQFLRPLEEGLADLPELKCTPQGATRLRNGNPGMVIASDVEYGEEAWASLEGKAVAVGTFKAGELHPSRVFNQD.

Aspartate 47 (nucleophile) is an active-site residue.

The protein belongs to the pseudouridine synthase TruB family. Type 1 subfamily.

The enzyme catalyses uridine(55) in tRNA = pseudouridine(55) in tRNA. Responsible for synthesis of pseudouridine from uracil-55 in the psi GC loop of transfer RNAs. This chain is tRNA pseudouridine synthase B, found in Ruegeria sp. (strain TM1040) (Silicibacter sp.).